The chain runs to 271 residues: Auxin-responsive protein IAA5 (271 aa).

The segment at 1–96 (MSPPLEPHDY…RHGASSGSVA (96 aa)) is disordered. 2 stretches are compositionally biased toward low complexity: residues 14–33 (SAAAASPTPSSSSCSSSPNP) and 40–50 (PRLTLRLGLPG). Positions 44–48 (LRLGL) match the EAR-like (transcriptional repression) motif. The 105-residue stretch at 151–255 (PLYVKVSMDG…RKLKIMRGSD (105 aa)) folds into the PB1 domain.

Belongs to the Aux/IAA family. Homodimers and heterodimers.

It is found in the nucleus. Its function is as follows. Aux/IAA proteins are short-lived transcriptional factors that function as repressors of early auxin response genes at low auxin concentrations. The chain is Auxin-responsive protein IAA5 (IAA5) from Oryza sativa subsp. japonica (Rice).